The primary structure comprises 96 residues: Aspartyl/glutamyl-tRNA(Asn/Gln) amidotransferase subunit C (96 aa).

The protein belongs to the GatC family. In terms of assembly, heterotrimer of A, B and C subunits.

The enzyme catalyses L-glutamyl-tRNA(Gln) + L-glutamine + ATP + H2O = L-glutaminyl-tRNA(Gln) + L-glutamate + ADP + phosphate + H(+). The catalysed reaction is L-aspartyl-tRNA(Asn) + L-glutamine + ATP + H2O = L-asparaginyl-tRNA(Asn) + L-glutamate + ADP + phosphate + 2 H(+). Allows the formation of correctly charged Asn-tRNA(Asn) or Gln-tRNA(Gln) through the transamidation of misacylated Asp-tRNA(Asn) or Glu-tRNA(Gln) in organisms which lack either or both of asparaginyl-tRNA or glutaminyl-tRNA synthetases. The reaction takes place in the presence of glutamine and ATP through an activated phospho-Asp-tRNA(Asn) or phospho-Glu-tRNA(Gln). The chain is Aspartyl/glutamyl-tRNA(Asn/Gln) amidotransferase subunit C from Exiguobacterium sibiricum (strain DSM 17290 / CCUG 55495 / CIP 109462 / JCM 13490 / 255-15).